A 202-amino-acid polypeptide reads, in one-letter code: Thymidylate kinase (202 aa).

7-14 (GIDGSGKT) contacts ATP.

This sequence belongs to the thymidylate kinase family.

It catalyses the reaction dTMP + ATP = dTDP + ADP. Its function is as follows. Phosphorylation of dTMP to form dTDP in both de novo and salvage pathways of dTTP synthesis. The chain is Thymidylate kinase from Ehrlichia ruminantium (strain Gardel).